The primary structure comprises 735 residues: Photosystem I P700 chlorophyll a apoprotein A2 (735 aa).

Helical transmembrane passes span 47 to 70, 136 to 159, 176 to 200, 274 to 292, 331 to 354, 370 to 396, 418 to 440, and 518 to 536; these read IFASHFGQLAIIFLWTSGNLFHVA, LFTGSVFLALVSAVFLFAGWLHLQ, LNHHLSGLFGVSSLAWTGHLVHVAI, MAHHHLAIAVIFIVAGHMY, LHFQLGLALASVGTITSMIAQHIY, AALYTHHQYIAGFIMCGAFAHGAIFFI, AIISHLSWVTLFLGFHTLGLYVH, and FLVHHAIALGLHTTTLILV. C560 and C569 together coordinate [4Fe-4S] cluster. The next 2 membrane-spanning stretches (helical) occupy residues 576–597 and 644–666; these read AFYLAVFWMLNTIGWVTFYFHW and LSVWAFCFLFGHLIYATGFMFLI. H655, M663, and Y671 together coordinate chlorophyll a. Residue W672 participates in phylloquinone binding. The helical transmembrane segment at 708-728 threads the bilayer; it reads LVGLVHFSVGYIFTYAAFLIA.

It belongs to the PsaA/PsaB family. As to quaternary structure, the PsaA/B heterodimer binds the P700 chlorophyll special pair and subsequent electron acceptors. PSI consists of a core antenna complex that captures photons, and an electron transfer chain that converts photonic excitation into a charge separation. The eukaryotic PSI reaction center is composed of at least 11 subunits. P700 is a chlorophyll a/chlorophyll a' dimer, A0 is one or more chlorophyll a, A1 is one or both phylloquinones and FX is a shared 4Fe-4S iron-sulfur center. serves as cofactor.

Its subcellular location is the plastid. It localises to the chloroplast thylakoid membrane. It carries out the reaction reduced [plastocyanin] + hnu + oxidized [2Fe-2S]-[ferredoxin] = oxidized [plastocyanin] + reduced [2Fe-2S]-[ferredoxin]. In terms of biological role, psaA and PsaB bind P700, the primary electron donor of photosystem I (PSI), as well as the electron acceptors A0, A1 and FX. PSI is a plastocyanin/cytochrome c6-ferredoxin oxidoreductase, converting photonic excitation into a charge separation, which transfers an electron from the donor P700 chlorophyll pair to the spectroscopically characterized acceptors A0, A1, FX, FA and FB in turn. Oxidized P700 is reduced on the lumenal side of the thylakoid membrane by plastocyanin or cytochrome c6. The protein is Photosystem I P700 chlorophyll a apoprotein A2 of Chlamydomonas moewusii (Chlamydomonas eugametos).